An 865-amino-acid chain; its full sequence is DNA-directed RNA polymerase subunit Rpo1N (865 aa).

Zn(2+) is bound by residues Cys60, Cys63, Cys70, His73, Cys100, Cys103, Cys146, and Cys149. Asp451, Asp453, and Asp455 together coordinate Mg(2+). The interval 500-531 (EHTSSQGKRLFSVRSRPPDPQEGRAPPPDREG) is disordered. The segment covering 515-531 (RPPDPQEGRAPPPDREG) has biased composition (basic and acidic residues).

The protein belongs to the RNA polymerase beta' chain family. As to quaternary structure, part of the RNA polymerase complex. The cofactor is Mg(2+). Zn(2+) serves as cofactor.

It is found in the cytoplasm. It catalyses the reaction RNA(n) + a ribonucleoside 5'-triphosphate = RNA(n+1) + diphosphate. Its function is as follows. DNA-dependent RNA polymerase (RNAP) catalyzes the transcription of DNA into RNA using the four ribonucleoside triphosphates as substrates. Forms the clamp head domain. In Methanothermobacter thermautotrophicus (strain Winter) (Methanobacterium thermoautotrophicum), this protein is DNA-directed RNA polymerase subunit Rpo1N.